Here is a 126-residue protein sequence, read N- to C-terminus: Protein ApaG (126 aa).

One can recognise an ApaG domain in the interval 2–126 (NQLAASVSVD…FRLSIPGLLH (125 aa)).

In Shewanella pealeana (strain ATCC 700345 / ANG-SQ1), this protein is Protein ApaG.